The primary structure comprises 487 residues: Aspartyl/glutamyl-tRNA(Asn/Gln) amidotransferase subunit B (487 aa).

The protein belongs to the GatB/GatE family. GatB subfamily. As to quaternary structure, heterotrimer of A, B and C subunits.

It catalyses the reaction L-glutamyl-tRNA(Gln) + L-glutamine + ATP + H2O = L-glutaminyl-tRNA(Gln) + L-glutamate + ADP + phosphate + H(+). It carries out the reaction L-aspartyl-tRNA(Asn) + L-glutamine + ATP + H2O = L-asparaginyl-tRNA(Asn) + L-glutamate + ADP + phosphate + 2 H(+). In terms of biological role, allows the formation of correctly charged Asn-tRNA(Asn) or Gln-tRNA(Gln) through the transamidation of misacylated Asp-tRNA(Asn) or Glu-tRNA(Gln) in organisms which lack either or both of asparaginyl-tRNA or glutaminyl-tRNA synthetases. The reaction takes place in the presence of glutamine and ATP through an activated phospho-Asp-tRNA(Asn) or phospho-Glu-tRNA(Gln). The protein is Aspartyl/glutamyl-tRNA(Asn/Gln) amidotransferase subunit B of Chlamydia caviae (strain ATCC VR-813 / DSM 19441 / 03DC25 / GPIC) (Chlamydophila caviae).